Reading from the N-terminus, the 2052-residue chain is Unconventional myosin-X (2052 aa).

N-acetylmethionine is present on methionine 1. One can recognise a Myosin motor domain in the interval 63–739 (EGVDDMATLT…LEQKLEKRQE (677 aa)). Residues asparagine 104, tyrosine 113, 160-165 (GAGKTE), and asparagine 215 contribute to the ATP site. Residues 619–641 (LHSLMATLSASNPFFVRCIKPNM) are actin-binding. IQ domains are found at residues 742-763 (VTRAAMVIRAHVLGYLARKQYK), 764-787 (KVLDCVVIIQKNYRAFLLRRRFLH), and 788-817 (LKKAAVVFQKQLRGQIARRVYRQLLAEKRA). The SAH stretch occupies residues 814–884 (EKRAEEEKRK…LSRELEKQKE (71 aa)). The disordered stretch occupies residues 819–843 (EEKRKREEEEKRKREEEERERERER). A coiled-coil region spans residues 885 to 935 (NKQVEEILRLEKEIEDLQRMKERQELSLTEASLQKLQQLRDEELRRLEDEA). 2 positions are modified to phosphoserine: serine 963 and serine 966. Residues 964–1093 (VGSGCTGEQG…DYDQDDYEDG (130 aa)) are disordered. Over residues 988–1003 (PEEEEVDEGFEADDDA) the composition is skewed to acidic residues. Polar residues predominate over residues 1040-1049 (VVPTSPSADS). Residues 1081 to 1092 (GDYDYDQDDYED) are compositionally biased toward acidic residues. Threonine 1152 carries the post-translational modification Phosphothreonine. PH domains are found at residues 1206-1304 (EALK…QVHA) and 1386-1491 (EFIV…NVTD). A MyTH4 domain is found at 1541–1689 (LPYGDINLNL…PSRDEIEALI (149 aa)). Residues 1694–2038 (MTSTVHCHGG…AYISMIVKKR (345 aa)) form the FERM domain.

The protein belongs to the TRAFAC class myosin-kinesin ATPase superfamily. Myosin family. Monomer, when in an inactive conformation in the cytosol. Homodimer in its active, membrane-bound conformation; antiparallel coiled coil-mediated dimer formation. Interacts with ECPAS. Interacts with NEO 1. Interacts with VASP. Interacts with DCC and ITGB5; the presence of DCC inhibits ITGB5 binding. Interacts with tubulin; ITGB5 or DCC binding inhibits tubulin binding. Interacts strongly with CALM3 and weakly with CALM, the CALM3 interaction is essential for function in filopodial extension and motility. Interacts with ITGB1, ITGB3 and ITGB5. In terms of tissue distribution, detected in kidney, testis, liver, kidney, cerebellum and brain cortex (at protein level).

It localises to the cytoplasm. Its subcellular location is the cytosol. It is found in the cell projection. The protein localises to the lamellipodium. The protein resides in the ruffle. It localises to the cytoskeleton. Its subcellular location is the filopodium tip. It is found in the cell cortex. The protein localises to the filopodium membrane. Functionally, myosins are actin-based motor molecules with ATPase activity. Unconventional myosins serve in intracellular movements. MYO10 binds to actin filaments and actin bundles and functions as a plus end-directed motor. Moves with higher velocity and takes larger steps on actin bundles than on single actin filaments. The tail domain binds to membranous compartments containing phosphatidylinositol 3,4,5-trisphosphate, which are then moved relative to actin filaments. Regulates cell shape, cell spreading and cell adhesion. Stimulates the formation and elongation of filopodia. In hippocampal neurons it induces the formation of dendritic filopodia by trafficking the actin-remodeling protein VASP to the tips of filopodia, where it promotes actin elongation. Plays a role in formation of the podosome belt in osteoclasts. The polypeptide is Unconventional myosin-X (MYO10) (Bos taurus (Bovine)).